The chain runs to 179 residues: Protein GrpE (179 aa).

Over residues 1–14 (MSKKDKKEEIKEEV) the composition is skewed to basic and acidic residues. The interval 1–40 (MSKKDKKEEIKEEVEATEPTTEESVEEVAEETSENKELQE) is disordered. Positions 15–32 (EATEPTTEESVEEVAEET) are enriched in acidic residues.

The protein belongs to the GrpE family. Homodimer.

It localises to the cytoplasm. Its function is as follows. Participates actively in the response to hyperosmotic and heat shock by preventing the aggregation of stress-denatured proteins, in association with DnaK and GrpE. It is the nucleotide exchange factor for DnaK and may function as a thermosensor. Unfolded proteins bind initially to DnaJ; upon interaction with the DnaJ-bound protein, DnaK hydrolyzes its bound ATP, resulting in the formation of a stable complex. GrpE releases ADP from DnaK; ATP binding to DnaK triggers the release of the substrate protein, thus completing the reaction cycle. Several rounds of ATP-dependent interactions between DnaJ, DnaK and GrpE are required for fully efficient folding. In Streptococcus mutans serotype c (strain ATCC 700610 / UA159), this protein is Protein GrpE.